The following is a 54-amino-acid chain: UPF0391 membrane protein Rmet_0093 (54 aa).

Transmembrane regions (helical) follow at residues 5-25 (ALVFFIVALIAAIFGFGGIAA) and 30-50 (IAKILFLIFLVVAIVTFVMGL).

This sequence belongs to the UPF0391 family.

It is found in the cell membrane. This is UPF0391 membrane protein Rmet_0093 from Cupriavidus metallidurans (strain ATCC 43123 / DSM 2839 / NBRC 102507 / CH34) (Ralstonia metallidurans).